The primary structure comprises 532 residues: Putative cysteine ligase BshC (532 aa).

Residues 431-451 (MAQAKDALAKVDASLVEAAER) adopt a coiled-coil conformation.

It belongs to the BshC family.

The sequence is that of Putative cysteine ligase BshC from Koribacter versatilis (strain Ellin345).